The primary structure comprises 397 residues: Bifunctional enzyme IspD/IspF (397 aa).

Positions 1 to 236 are 2-C-methyl-D-erythritol 4-phosphate cytidylyltransferase; sequence MSIAAIILAA…LKGMQIFPDI (236 aa). The 2-C-methyl-D-erythritol 2,4-cyclodiphosphate synthase stretch occupies residues 237 to 397; sequence RTGNGYDVHS…TVIYPGEIPK (161 aa). A divalent metal cation is bound by residues D243 and H245. Residues 243 to 245 and 269 to 270 each bind 4-CDP-2-C-methyl-D-erythritol 2-phosphate; these read DVH and HS. H277 contacts a divalent metal cation. Residues 291–293, 367–370, F374, and R377 each bind 4-CDP-2-C-methyl-D-erythritol 2-phosphate; these read DIG and TTNE.

The protein in the N-terminal section; belongs to the IspD/TarI cytidylyltransferase family. IspD subfamily. In the C-terminal section; belongs to the IspF family. A divalent metal cation serves as cofactor.

It catalyses the reaction 2-C-methyl-D-erythritol 4-phosphate + CTP + H(+) = 4-CDP-2-C-methyl-D-erythritol + diphosphate. The enzyme catalyses 4-CDP-2-C-methyl-D-erythritol 2-phosphate = 2-C-methyl-D-erythritol 2,4-cyclic diphosphate + CMP. Its pathway is isoprenoid biosynthesis; isopentenyl diphosphate biosynthesis via DXP pathway; isopentenyl diphosphate from 1-deoxy-D-xylulose 5-phosphate: step 2/6. It participates in isoprenoid biosynthesis; isopentenyl diphosphate biosynthesis via DXP pathway; isopentenyl diphosphate from 1-deoxy-D-xylulose 5-phosphate: step 4/6. Functionally, bifunctional enzyme that catalyzes the formation of 4-diphosphocytidyl-2-C-methyl-D-erythritol from CTP and 2-C-methyl-D-erythritol 4-phosphate (MEP) (IspD), and catalyzes the conversion of 4-diphosphocytidyl-2-C-methyl-D-erythritol 2-phosphate (CDP-ME2P) to 2-C-methyl-D-erythritol 2,4-cyclodiphosphate (ME-CPP) with a corresponding release of cytidine 5-monophosphate (CMP) (IspF). In Bartonella bacilliformis (strain ATCC 35685 / KC583 / Herrer 020/F12,63), this protein is Bifunctional enzyme IspD/IspF.